The following is a 363-amino-acid chain: MADVVLRNVRKTYPGGFEAIKGVDFAVGDGQFCVLVGPSGCGKSTLLRMVAGLETITAGEIEIGGRVVNDVEPADRDIAMVFQNYALYPHMTVYNNMAYGLRNRGMAKAEIDARVQEAARILELGPMLIRKPRQLSGGQRQRVAMGRAIVRHPKVFLFDEPLSNLDAKLRVAMRVEIRKLQRRLATTAIYVTHDQLEAMTLADVLVVMNGGQVEQIGSPLDVYAKPATTFVASFIGAPPMNLLTLAHDLRSQLSGAPPEAGILGVRPEDLVIGPGTAAQGGLALDITVEAIERVGPETFVYGVRAGHEARPVVAGKPGEGAGGDVIVRIPGQAAPPVGERITVVAPPHGLHLFSADGRRRIAG.

The 232-residue stretch at 4 to 235 folds into the ABC transporter domain; that stretch reads VVLRNVRKTY…PATTFVASFI (232 aa). Residue 37–44 participates in ATP binding; it reads GPSGCGKS.

The protein belongs to the ABC transporter superfamily. sn-glycerol-3-phosphate importer (TC 3.A.1.1.3) family. As to quaternary structure, the complex is composed of two ATP-binding proteins (UgpC), two transmembrane proteins (UgpA and UgpE) and a solute-binding protein (UgpB).

It is found in the cell inner membrane. It carries out the reaction sn-glycerol 3-phosphate(out) + ATP + H2O = sn-glycerol 3-phosphate(in) + ADP + phosphate + H(+). Part of the ABC transporter complex UgpBAEC involved in sn-glycerol-3-phosphate (G3P) import. Responsible for energy coupling to the transport system. This is sn-glycerol-3-phosphate import ATP-binding protein UgpC from Rhodopseudomonas palustris (strain ATCC BAA-98 / CGA009).